A 334-amino-acid polypeptide reads, in one-letter code: GTP 3',8-cyclase (334 aa).

One can recognise a Radical SAM core domain in the interval 13–239 (RFHRKFYYLR…KVKAANDGPA (227 aa)). Arg-22 lines the GTP pocket. The [4Fe-4S] cluster site is built by Cys-29 and Cys-33. Residue Tyr-35 participates in S-adenosyl-L-methionine binding. Cys-36 contacts [4Fe-4S] cluster. Arg-73 is a binding site for GTP. Gly-77 provides a ligand contact to S-adenosyl-L-methionine. Residue Thr-104 coordinates GTP. Ser-128 lines the S-adenosyl-L-methionine pocket. Position 165 (Lys-165) interacts with GTP. Residue Met-199 coordinates S-adenosyl-L-methionine. [4Fe-4S] cluster contacts are provided by Cys-262 and Cys-265. Residue 267 to 269 (RLR) coordinates GTP. Cys-279 is a [4Fe-4S] cluster binding site.

The protein belongs to the radical SAM superfamily. MoaA family. As to quaternary structure, monomer and homodimer. [4Fe-4S] cluster is required as a cofactor.

It catalyses the reaction GTP + AH2 + S-adenosyl-L-methionine = (8S)-3',8-cyclo-7,8-dihydroguanosine 5'-triphosphate + 5'-deoxyadenosine + L-methionine + A + H(+). It functions in the pathway cofactor biosynthesis; molybdopterin biosynthesis. Catalyzes the cyclization of GTP to (8S)-3',8-cyclo-7,8-dihydroguanosine 5'-triphosphate. This Vibrio vulnificus (strain CMCP6) protein is GTP 3',8-cyclase.